Consider the following 573-residue polypeptide: Solute carrier family 41 member 2 (573 aa).

Topologically, residues 1-162 are extracellular; that stretch reads MTNSKGRSIT…KESSGIMALQ (162 aa). A phosphoserine mark is found at Ser136 and Ser137. Residues 163–183 form a helical membrane-spanning segment; sequence ILVPFLLAGFGTVSAGMVLDI. Over 184–195 the chain is Cytoplasmic; it reads VQHWEVFRKVTE. A helical transmembrane segment spans residues 196 to 216; it reads VFILVPALLGLKGNLEMTLAS. The Extracellular portion of the chain corresponds to 217 to 245; sequence RLSTAVNIGKMDSPIEKWNLIIGNLALKQ. Residues 246-266 traverse the membrane as a helical segment; it reads VQATVVGFLAAVAAIILGWIP. At 267–282 the chain is on the cytoplasmic side; it reads EGKYYLDHSILLCSSS. A helical transmembrane segment spans residues 283–303; that stretch reads VATAFIASLLQGIIMVGVIVG. Topologically, residues 304-313 are extracellular; sequence SKKTGINPDN. Residues 314 to 334 traverse the membrane as a helical segment; it reads VATPIAASFGDLITLAILAWI. Residues 335-347 are Cytoplasmic-facing; the sequence is SQGLYSCLETYYY. The chain crosses the membrane as a helical span at residues 348–368; that stretch reads ISPLVGVFFLALTPIWIIIAA. Over 369–376 the chain is Extracellular; that stretch reads KHPATRTV. A helical membrane pass occupies residues 377–397; it reads LHSGWEPVITAMVISSIGGLI. Topologically, residues 398–406 are cytoplasmic; sequence LDTTVSDPN. Residues 407 to 427 traverse the membrane as a helical segment; it reads LVGIVVYTPVINGIGGNLVAI. Over 428–469 the chain is Extracellular; the sequence is QASRISTYLHLHSIPGELPDEPKGCYYPFRTFFGPGVNNKSA. Residues 470–490 form a helical membrane-spanning segment; that stretch reads QVLLLLVIPGHLIFLYTIHLM. Over 491–498 the chain is Cytoplasmic; that stretch reads KSGHTSLT. Residues 499 to 519 form a helical membrane-spanning segment; it reads IIFIVVYLFAAVLQVFTLLWI. The Extracellular portion of the chain corresponds to 520-543; it reads ADWMVHHFWRKGKDPDSFSIPYLT. A helical membrane pass occupies residues 544–564; sequence ALGDLLGTALLALSFHFLWLI. Residues 565 to 573 lie on the Cytoplasmic side of the membrane; it reads GDRDGDVGD.

It belongs to the SLC41A transporter family.

The protein localises to the cell membrane. It carries out the reaction Mg(2+)(in) = Mg(2+)(out). The catalysed reaction is Mn(2+)(in) = Mn(2+)(out). It catalyses the reaction Co(2+)(in) = Co(2+)(out). The enzyme catalyses Ni(2+)(in) = Ni(2+)(out). It carries out the reaction Fe(2+)(in) = Fe(2+)(out). Functionally, acts as a plasma-membrane magnesium transporter. Can also mediate the transport of other divalent metal cations in an order of Ba(2+) &gt; Ni(2+) &gt; Co(2+) &gt; Fe(2+) &gt; Mn(2+). The chain is Solute carrier family 41 member 2 (SLC41A2) from Macaca fascicularis (Crab-eating macaque).